Reading from the N-terminus, the 740-residue chain is NAD(P)H-quinone oxidoreductase subunit 5, chloroplastic (740 aa).

Transmembrane regions (helical) follow at residues 9-29 (WIIPFIPLPVPILLGGGLLLF), 40-60 (WSFLSIFLLSIVMIFSLYLSI), 89-109 (IDPLTCIMLILITTVGILVLI), 125-145 (FAYMGFFNTSMLGLVTSSNLI), 147-167 (IYFFWELVGMCSYLLIGFWFT), 185-205 (GDFGLLLGILGLYWVTGSFEF), 221-241 (VNLLFLTLCAFLLFMGPIAKS), 258-278 (TPISALIHAATMVAAGIFLVA), 283-303 (LFIVIPSIMYIISLIGIITIL), 327-347 (LGYMMLALGMGSYRSALFHLI), 354-374 (ALLFLGSGSIIHSMEAIVGYS), 396-416 (TAFLLGTLSLCGIPPLACFWS), 425-445 (LLFSPIFAIIACSTAGLTAFY), 547-567 (ILFPMLVLLLFTLFIGAIGIP), 606-626 (FSVSIAFFGIFIAYCLYKPFY), and 718-738 (ISSYLFLYLSYVFLFFLFLKI).

Belongs to the complex I subunit 5 family. In terms of assembly, NDH is composed of at least 16 different subunits, 5 of which are encoded in the nucleus.

Its subcellular location is the plastid. It localises to the chloroplast thylakoid membrane. The catalysed reaction is a plastoquinone + NADH + (n+1) H(+)(in) = a plastoquinol + NAD(+) + n H(+)(out). It carries out the reaction a plastoquinone + NADPH + (n+1) H(+)(in) = a plastoquinol + NADP(+) + n H(+)(out). NDH shuttles electrons from NAD(P)H:plastoquinone, via FMN and iron-sulfur (Fe-S) centers, to quinones in the photosynthetic chain and possibly in a chloroplast respiratory chain. The immediate electron acceptor for the enzyme in this species is believed to be plastoquinone. Couples the redox reaction to proton translocation, and thus conserves the redox energy in a proton gradient. In Aethionema cordifolium (Lebanon stonecress), this protein is NAD(P)H-quinone oxidoreductase subunit 5, chloroplastic (ndhF).